The primary structure comprises 679 residues: UvrABC system protein B (679 aa).

One can recognise a Helicase ATP-binding domain in the interval 31 to 414 (ENLTDGLAHQ…ELEKSGSEII (384 aa)). Residue 44-51 (GVTGSGKT) coordinates ATP. The Beta-hairpin signature appears at 97–120 (YYDYYQPEAYVPSSDTFIEKDASI). The Helicase C-terminal domain maps to 436-589 (QVDDLLSEAR…QTKYNEEHGI (154 aa)). The UVR domain occupies 639 to 674 (QQQIKKLEQQMYKFAQDLEFEKAAAIRDQLHQLREQ).

It belongs to the UvrB family. As to quaternary structure, forms a heterotetramer with UvrA during the search for lesions. Interacts with UvrC in an incision complex.

It localises to the cytoplasm. In terms of biological role, the UvrABC repair system catalyzes the recognition and processing of DNA lesions. A damage recognition complex composed of 2 UvrA and 2 UvrB subunits scans DNA for abnormalities. Upon binding of the UvrA(2)B(2) complex to a putative damaged site, the DNA wraps around one UvrB monomer. DNA wrap is dependent on ATP binding by UvrB and probably causes local melting of the DNA helix, facilitating insertion of UvrB beta-hairpin between the DNA strands. Then UvrB probes one DNA strand for the presence of a lesion. If a lesion is found the UvrA subunits dissociate and the UvrB-DNA preincision complex is formed. This complex is subsequently bound by UvrC and the second UvrB is released. If no lesion is found, the DNA wraps around the other UvrB subunit that will check the other stand for damage. The polypeptide is UvrABC system protein B (Haemophilus influenzae (strain ATCC 51907 / DSM 11121 / KW20 / Rd)).